Reading from the N-terminus, the 342-residue chain is MMIEKQKALEMAISQIERQFGKGAIMRLGDTAKLNVEVIPTGSLELDIALGVGGVPRGRIIEIFGPESSGKTTLALHMIAEAQKIGGTGAFIDAEHALDPVYAKNLGVNIDDLLVAQPDTGEQALEIAEALVRSGAVDIIVIDSVAALVPKAEIEGEMGDSHVGLQARLMSQALRKLAGVTSKSKSIVVFINQLREKVGVMFGNPETTPGGRALKFYATIRLDVRKVDNIKQGNEIVGSRTRVKVVKNKIAPPFKQAEFDIMYGEGISREGSILDLGTALDIIEKSGSWYSYKDIKLGQGRENAKQFLKENKEIAEEIERKIRENFNLAYNKIKSAPDAIVE.

65-72 provides a ligand contact to ATP; that stretch reads GPESSGKT.

The protein belongs to the RecA family.

The protein resides in the cytoplasm. Can catalyze the hydrolysis of ATP in the presence of single-stranded DNA, the ATP-dependent uptake of single-stranded DNA by duplex DNA, and the ATP-dependent hybridization of homologous single-stranded DNAs. It interacts with LexA causing its activation and leading to its autocatalytic cleavage. In Caldanaerobacter subterraneus subsp. tengcongensis (strain DSM 15242 / JCM 11007 / NBRC 100824 / MB4) (Thermoanaerobacter tengcongensis), this protein is Protein RecA.